The following is a 474-amino-acid chain: Lipoprotein lipase (474 aa).

A signal peptide spans 1-27 (MESKALLLVVLGVWLQSLTAFRGGVAA). The interval 32–53 (RDFSDIESKFALRTPEDTAEDT) is interaction with GPIHBP1. Cys54 and Cys67 are disulfide-bonded. A glycan (N-linked (GlcNAc...) asparagine) is linked at Asn70. Tyr121 carries the 3'-nitrotyrosine modification. Ser159 (nucleophile) is an active-site residue. The active-site Charge relay system is the Asp183. The residue at position 191 (Tyr191) is a 3'-nitrotyrosine. Residues Ala194, Arg197, Ser199, and Asp202 each contribute to the Ca(2+) site. The cysteines at positions 243 and 266 are disulfide-linked. Positions 243 to 266 (CNIGEAIRVIAERGLGDVDQLVKC) are essential for determining substrate specificity. His268 (charge relay system) is an active-site residue. Intrachain disulfides connect Cys291–Cys310 and Cys302–Cys305. The PLAT domain maps to 341-464 (FHYQVKIHFS…KGKDSAVFVK (124 aa)). Residue Tyr343 is modified to 3'-nitrotyrosine. The N-linked (GlcNAc...) asparagine glycan is linked to Asn386. The interval 417–421 (WPDWW) is important for interaction with lipoprotein particles. Residues 430 to 434 (RIRVK) are important for heparin binding. The interval 443-467 (IFCAREKVSHLQKGKDSAVFVKCHD) is interaction with GPIHBP1. Cys445 and Cys465 are oxidised to a cystine.

Belongs to the AB hydrolase superfamily. Lipase family. In terms of assembly, homodimer. Interacts with GPIHBP1 with 1:1 stoichiometry. Interacts with APOC2; the interaction activates LPL activity in the presence of lipids. Interaction with heparan sulfate proteoglycans is required to protect LPL against loss of activity. Associates with lipoprotein particles in blood plasma. Interacts with LMF1 and SEL1L; interaction with SEL1L is required to prevent aggregation of newly synthesized LPL in the endoplasmic reticulum (ER), and for normal export of LPL from the ER to the extracellular space. Interacts with SORL1; SORL1 acts as a sorting receptor, promoting LPL localization to endosomes and later to lysosomes, leading to degradation of newly synthesized LPL. Post-translationally, tyrosine nitration after lipopolysaccharide (LPS) challenge down-regulates the lipase activity. In terms of processing, N-glycosylated. In terms of tissue distribution, detected in white and brown adipose tissue and heart muscle, especially at the lumenal surface of capillaries. Detected on capillary endothelium in the lactating mammary gland. Detected in blood plasma (at protein level). Expressed in liver, epididymal fat, heart, psoas muscle, lactating mammary gland, adrenal, lung, and ovary. Highest levels in heart and adrenal gland.

It localises to the cell membrane. It is found in the secreted. Its subcellular location is the extracellular space. The protein localises to the extracellular matrix. The enzyme catalyses a triacylglycerol + H2O = a diacylglycerol + a fatty acid + H(+). The catalysed reaction is a 1,2-diacyl-sn-glycero-3-phosphocholine + H2O = a 2-acyl-sn-glycero-3-phosphocholine + a fatty acid + H(+). It carries out the reaction 1,2,3-tri-(9Z-octadecenoyl)-glycerol + H2O = di-(9Z)-octadecenoylglycerol + (9Z)-octadecenoate + H(+). It catalyses the reaction 1,2-di-(9Z-octadecenoyl)-sn-glycero-3-phosphocholine + H2O = (9Z-octadecenoyl)-sn-glycero-3-phosphocholine + (9Z)-octadecenoate + H(+). The enzyme catalyses 1,2,3-tributanoylglycerol + H2O = dibutanoylglycerol + butanoate + H(+). The catalysed reaction is 1,2-dihexadecanoyl-sn-glycero-3-phosphocholine + H2O = hexadecanoyl-sn-glycero-3-phosphocholine + hexadecanoate + H(+). With respect to regulation, the apolipoprotein APOC2 acts as a coactivator of LPL activity. Ca(2+) binding promotes protein stability and formation of the active homodimer. Interaction with GPIHBP1 protects LPL against inactivation by ANGPTL4. Key enzyme in triglyceride metabolism. Catalyzes the hydrolysis of triglycerides from circulating chylomicrons and very low density lipoproteins (VLDL), and thereby plays an important role in lipid clearance from the blood stream, lipid utilization and storage. Although it has both phospholipase and triglyceride lipase activities it is primarily a triglyceride lipase with low but detectable phospholipase activity. Mediates margination of triglyceride-rich lipoprotein particles in capillaries. Recruited to its site of action on vascular endothelium by binding to GPIHBP1 and cell surface heparan sulfate proteoglycans. The chain is Lipoprotein lipase (Lpl) from Mus musculus (Mouse).